A 466-amino-acid chain; its full sequence is Soluble pyridine nucleotide transhydrogenase (466 aa).

36 to 45 contributes to the FAD binding site; sequence ERYQNVGGGC.

The protein belongs to the class-I pyridine nucleotide-disulfide oxidoreductase family. FAD serves as cofactor.

The protein resides in the cytoplasm. The catalysed reaction is NAD(+) + NADPH = NADH + NADP(+). Functionally, conversion of NADPH, generated by peripheral catabolic pathways, to NADH, which can enter the respiratory chain for energy generation. This Escherichia coli O81 (strain ED1a) protein is Soluble pyridine nucleotide transhydrogenase.